The primary structure comprises 235 residues: uncharacterized protein (235 aa).

The protein to B.subtilis YncM.

This is an uncharacterized protein from Bacillus subtilis (strain 168).